Here is a 92-residue protein sequence, read N- to C-terminus: Small ribosomal subunit protein uS19 (92 aa).

The protein belongs to the universal ribosomal protein uS19 family.

Functionally, protein S19 forms a complex with S13 that binds strongly to the 16S ribosomal RNA. The sequence is that of Small ribosomal subunit protein uS19 from Aliivibrio fischeri (strain ATCC 700601 / ES114) (Vibrio fischeri).